Reading from the N-terminus, the 216-residue chain is Probable GTP-binding protein EngB (216 aa).

The 178-residue stretch at 37-214 (DGLEVAFAGR…RAAMIRLLDE (178 aa)) folds into the EngB-type G domain. Residues 45–52 (GRSNVGKS), 72–76 (GRTQE), 92–95 (DMPG), 159–162 (TKAD), and 193–195 (TSS) each bind GTP. S52 and T74 together coordinate Mg(2+).

This sequence belongs to the TRAFAC class TrmE-Era-EngA-EngB-Septin-like GTPase superfamily. EngB GTPase family. Requires Mg(2+) as cofactor.

Functionally, necessary for normal cell division and for the maintenance of normal septation. This Rhodopseudomonas palustris (strain HaA2) protein is Probable GTP-binding protein EngB.